The sequence spans 240 residues: 1-(5-phosphoribosyl)-5-[(5-phosphoribosylamino)methylideneamino] imidazole-4-carboxamide isomerase (240 aa).

The active-site Proton acceptor is the aspartate 8. Aspartate 129 functions as the Proton donor in the catalytic mechanism.

Belongs to the HisA/HisF family.

The protein resides in the cytoplasm. It catalyses the reaction 1-(5-phospho-beta-D-ribosyl)-5-[(5-phospho-beta-D-ribosylamino)methylideneamino]imidazole-4-carboxamide = 5-[(5-phospho-1-deoxy-D-ribulos-1-ylimino)methylamino]-1-(5-phospho-beta-D-ribosyl)imidazole-4-carboxamide. It functions in the pathway amino-acid biosynthesis; L-histidine biosynthesis; L-histidine from 5-phospho-alpha-D-ribose 1-diphosphate: step 4/9. The protein is 1-(5-phosphoribosyl)-5-[(5-phosphoribosylamino)methylideneamino] imidazole-4-carboxamide isomerase of Listeria monocytogenes serotype 4a (strain HCC23).